Here is a 419-residue protein sequence, read N- to C-terminus: Tyrosine--tRNA ligase (419 aa).

Tyr34 contacts L-tyrosine. A 'HIGH' region motif is present at residues 39-48 (PSGDSMHIGH). Tyr168 and Gln172 together coordinate L-tyrosine. Positions 230 to 234 (KFGKS) match the 'KMSKS' region motif. Lys233 is an ATP binding site. One can recognise an S4 RNA-binding domain in the interval 352–418 (ANLVDWLVTL…GKKKYFLVSY (67 aa)).

Belongs to the class-I aminoacyl-tRNA synthetase family. TyrS type 1 subfamily. In terms of assembly, homodimer.

It is found in the cytoplasm. It catalyses the reaction tRNA(Tyr) + L-tyrosine + ATP = L-tyrosyl-tRNA(Tyr) + AMP + diphosphate + H(+). Its function is as follows. Catalyzes the attachment of tyrosine to tRNA(Tyr) in a two-step reaction: tyrosine is first activated by ATP to form Tyr-AMP and then transferred to the acceptor end of tRNA(Tyr). The chain is Tyrosine--tRNA ligase from Listeria monocytogenes serotype 4b (strain F2365).